We begin with the raw amino-acid sequence, 85 residues long: MAHKKGVGSTRNGRDSDGQRLGCKKFGGEHVKAGNIIYRQHGTKIHPGNNVGLGRDYTLFALIEGVVKFERMGRDRKKVSVYPAN.

Residues 1 to 21 (MAHKKGVGSTRNGRDSDGQRL) are disordered.

This sequence belongs to the bacterial ribosomal protein bL27 family.

In Geotalea uraniireducens (strain Rf4) (Geobacter uraniireducens), this protein is Large ribosomal subunit protein bL27.